We begin with the raw amino-acid sequence, 163 residues long: Glyoxalase domain-containing protein 5 (163 aa).

The VOC domain maps to 41 to 161; that stretch reads HLDHLVLTVR…DDNLIEVSNY (121 aa).

Belongs to the glyoxalase I family.

This is Glyoxalase domain-containing protein 5 (glod5) from Danio rerio (Zebrafish).